The primary structure comprises 446 residues: Alkylglycerol monooxygenase (446 aa).

The next 2 membrane-spanning stretches (helical) occupy residues 39 to 59 and 103 to 123; these read VNQATPYFIGLILLEIVLGWL and FHFLELPWDSAWTWWLAFLGV. Positions 117 to 248 constitute a Fatty acid hydroxylase domain; sequence WLAFLGVDMG…LIIWDRMFGT (132 aa). The Histidine box-1 signature appears at 131-135; it reads HRFAH. A Histidine box-2 motif is present at residues 144-148; it reads HQVHH. A helical membrane pass occupies residues 167–187; sequence FSSWIFYSPLALLIPPSVFAV. The Histidine box-3 motif lies at 220-224; the sequence is HRVHH. 3 helical membrane-spanning segments follow: residues 329 to 349, 362 to 382, and 410 to 430; these read AWSPVMQAYVILQFFLLLDVY, LTVILLTAYVLLSLTSLGFLI, and PLLPALAFPMEAFILISTIYW.

This sequence belongs to the sterol desaturase family. TMEM195 subfamily. Fe cation serves as cofactor.

It is found in the endoplasmic reticulum membrane. It catalyses the reaction 1-O-(1,2-saturated-alkyl)-sn-glycerol + (6R)-L-erythro-5,6,7,8-tetrahydrobiopterin + O2 = a 1-(1-hydroxyalkyl)-sn-glycerol + (6R)-L-erythro-6,7-dihydrobiopterin + H2O. In terms of biological role, glyceryl-ether monooxygenase that cleaves the O-alkyl bond of ether lipids. Ether lipids are essential components of brain membranes. The protein is Alkylglycerol monooxygenase (agmo) of Danio rerio (Zebrafish).